A 422-amino-acid polypeptide reads, in one-letter code: 3-phosphoshikimate 1-carboxyvinyltransferase (422 aa).

Lys20, Ser21, and Arg25 together coordinate 3-phosphoshikimate. Phosphoenolpyruvate is bound at residue Lys20. Residues Gly91 and Arg119 each coordinate phosphoenolpyruvate. 3-phosphoshikimate is bound by residues Thr163, Ser164, Gln165, Asp305, Gln328, and Lys332. Gln165 is a phosphoenolpyruvate binding site. Catalysis depends on Asp305, which acts as the Proton acceptor. Phosphoenolpyruvate contacts are provided by Arg336 and Arg377.

Belongs to the EPSP synthase family. Monomer.

It is found in the cytoplasm. It carries out the reaction 3-phosphoshikimate + phosphoenolpyruvate = 5-O-(1-carboxyvinyl)-3-phosphoshikimate + phosphate. The protein operates within metabolic intermediate biosynthesis; chorismate biosynthesis; chorismate from D-erythrose 4-phosphate and phosphoenolpyruvate: step 6/7. In terms of biological role, catalyzes the transfer of the enolpyruvyl moiety of phosphoenolpyruvate (PEP) to the 5-hydroxyl of shikimate-3-phosphate (S3P) to produce enolpyruvyl shikimate-3-phosphate and inorganic phosphate. The sequence is that of 3-phosphoshikimate 1-carboxyvinyltransferase from Ruminiclostridium cellulolyticum (strain ATCC 35319 / DSM 5812 / JCM 6584 / H10) (Clostridium cellulolyticum).